A 92-amino-acid polypeptide reads, in one-letter code: Small ribosomal subunit protein uS17 (92 aa).

The protein belongs to the universal ribosomal protein uS17 family. Part of the 30S ribosomal subunit.

Functionally, one of the primary rRNA binding proteins, it binds specifically to the 5'-end of 16S ribosomal RNA. This chain is Small ribosomal subunit protein uS17, found in Cupriavidus metallidurans (strain ATCC 43123 / DSM 2839 / NBRC 102507 / CH34) (Ralstonia metallidurans).